We begin with the raw amino-acid sequence, 315 residues long: 4-diphosphocytidyl-2-C-methyl-D-erythritol kinase (315 aa).

Lysine 26 is a catalytic residue. Proline 111 to alanine 121 serves as a coordination point for ATP. Residue aspartate 153 is part of the active site.

The protein belongs to the GHMP kinase family. IspE subfamily.

The enzyme catalyses 4-CDP-2-C-methyl-D-erythritol + ATP = 4-CDP-2-C-methyl-D-erythritol 2-phosphate + ADP + H(+). The protein operates within isoprenoid biosynthesis; isopentenyl diphosphate biosynthesis via DXP pathway; isopentenyl diphosphate from 1-deoxy-D-xylulose 5-phosphate: step 3/6. Catalyzes the phosphorylation of the position 2 hydroxy group of 4-diphosphocytidyl-2C-methyl-D-erythritol. The protein is 4-diphosphocytidyl-2-C-methyl-D-erythritol kinase of Salinispora tropica (strain ATCC BAA-916 / DSM 44818 / JCM 13857 / NBRC 105044 / CNB-440).